The primary structure comprises 432 residues: Trigger factor (432 aa).

Positions 161-246 (EDRVTIDFTG…LKKVEERELP (86 aa)) constitute a PPIase FKBP-type domain.

The protein belongs to the FKBP-type PPIase family. Tig subfamily. In terms of assembly, homodimer and monomer. In vivo most of the ribosomes are in complex with monomeric TF. Uncomplexed TF, however, is in a monomer-dimer equilibrium with approximately two thirds of TF existing in a dimeric state.

The protein localises to the cytoplasm. The catalysed reaction is [protein]-peptidylproline (omega=180) = [protein]-peptidylproline (omega=0). In terms of biological role, involved in protein export. Acts as a chaperone by maintaining the newly synthesized protein in an open conformation. Functions as a peptidyl-prolyl cis-trans isomerase. This is Trigger factor from Escherichia coli O139:H28 (strain E24377A / ETEC).